The chain runs to 396 residues: NADH-quinone oxidoreductase subunit D 1 (396 aa).

The protein belongs to the complex I 49 kDa subunit family. As to quaternary structure, NDH-1 is composed of 14 different subunits. Subunits NuoB, C, D, E, F, and G constitute the peripheral sector of the complex.

Its subcellular location is the cell inner membrane. It catalyses the reaction a quinone + NADH + 5 H(+)(in) = a quinol + NAD(+) + 4 H(+)(out). Its function is as follows. NDH-1 shuttles electrons from NADH, via FMN and iron-sulfur (Fe-S) centers, to quinones in the respiratory chain. The immediate electron acceptor for the enzyme in this species is believed to be ubiquinone. Couples the redox reaction to proton translocation (for every two electrons transferred, four hydrogen ions are translocated across the cytoplasmic membrane), and thus conserves the redox energy in a proton gradient. The polypeptide is NADH-quinone oxidoreductase subunit D 1 (Sinorhizobium medicae (strain WSM419) (Ensifer medicae)).